Here is a 127-residue protein sequence, read N- to C-terminus: Large ribosomal subunit protein bL17 (127 aa).

The protein belongs to the bacterial ribosomal protein bL17 family. Part of the 50S ribosomal subunit. Contacts protein L32.

The sequence is that of Large ribosomal subunit protein bL17 from Haemophilus ducreyi (strain 35000HP / ATCC 700724).